The primary structure comprises 559 residues: Chaperonin GroEL 1 (559 aa).

Residues 29–32 (TIGP), 86–90 (DGTTT), glycine 413, 476–478 (NAL), and aspartate 492 contribute to the ATP site. Positions 521-541 (KPEPPAPAPAGDGDPMGGMGG) are disordered.

Belongs to the chaperonin (HSP60) family. In terms of assembly, forms a cylinder of 14 subunits composed of two heptameric rings stacked back-to-back. Interacts with the co-chaperonin GroES.

It is found in the cytoplasm. The catalysed reaction is ATP + H2O + a folded polypeptide = ADP + phosphate + an unfolded polypeptide.. Together with its co-chaperonin GroES, plays an essential role in assisting protein folding. The GroEL-GroES system forms a nano-cage that allows encapsulation of the non-native substrate proteins and provides a physical environment optimized to promote and accelerate protein folding. The chain is Chaperonin GroEL 1 from Synechococcus sp. (strain CC9605).